The following is a 1818-amino-acid chain: Integrin beta-4 (1818 aa).

A signal peptide spans 1 to 28; the sequence is MAGPCCSPWVKLLLLAAMLSASLPGDLA. The Extracellular segment spans residues 29-712; it reads NRCKKAQVKS…HKKKDCPPGS (684 aa). The PSI domain maps to 30–74; sequence RCKKAQVKSCTECIRVDKSCAYCTDELFKERRCNTQAELLAAGCR. Intrachain disulfides connect Cys31–Cys49, Cys39–Cys457, Cys42–Cys62, Cys52–Cys73, Cys246–Cys289, Cys459–Cys478, Cys470–Cys481, and Cys483–Cys492. The VWFA domain maps to 132–310; sequence DLYILMDFSN…KTQDYPSVPT (179 aa). The Mg(2+) site is built by Ser140 and Ser142. Ca(2+)-binding residues include Ser142, Asp145, Asp146, and Asp177. The involved in NRG1- and IGF1-binding stretch occupies residues 195 to 200; it reads WPNSDP. Asn229, Asp231, Pro233, and Glu234 together coordinate Ca(2+). Glu234 provides a ligand contact to Mg(2+). A glycan (N-linked (GlcNAc...) asparagine) is linked at Asn328. Glu351 is a Ca(2+) binding site. 4 consecutive I-EGF domains span residues 459 to 493, 494 to 539, 540 to 576, and 577 to 617; these read CELQ…KTCN, CSTG…HFCE, YDNF…RSCD, and CPLS…TTCE. The Cell attachment site motif lies at 473-475; it reads RGD. Asn493 carries an N-linked (GlcNAc...) asparagine glycan. Intrachain disulfides connect Cys494–Cys522, Cys505–Cys520, Cys514–Cys525, Cys527–Cys538, Cys545–Cys559, Cys553–Cys564, Cys566–Cys575, Cys577–Cys600, Cys584–Cys598, Cys592–Cys603, and Cys605–Cys616. Asn581 is a glycosylation site (N-linked (GlcNAc...) asparagine). The N-linked (GlcNAc...) asparagine glycan is linked to Asn619. 4 disulfides stabilise this stretch: Cys628-Cys673, Cys634-Cys653, Cys637-Cys650, and Cys682-Cys708. Asn697 is a glycosylation site (N-linked (GlcNAc...) asparagine). The helical transmembrane segment at 713–733 threads the bilayer; sequence FWWLIPLLIFLLLLLALLLLL. A palmitoylated on several cysteines region spans residues 734-751; the sequence is CWKYCACCKACLGLLPCC. The Cytoplasmic portion of the chain corresponds to 734 to 1818; it reads CWKYCACCKA…THMDQQFFQT (1085 aa). Ser773 is modified (phosphoserine). Residues 981-1086 enclose the Calx-beta domain; the sequence is VNITIIKEQA…QVRRFQVQLS (106 aa). The Cell attachment site signature appears at 1005-1007; that stretch reads RGD. 2 positions are modified to phosphoserine: Ser1071 and Ser1121. Positions 1115–1137 are disordered; sequence INQTLSSPPPPHGDLGAPQNPNA. 2 consecutive Fibronectin type-III domains span residues 1131-1220 and 1224-1323; these read APQN…THQE and EPGR…TQPK. A disordered region spans residues 1402–1433; the sequence is LSASSGRSDEDGSVAGGVEGEGSGWIRGATPR. The span at 1415-1426 shows a compositional bias: gly residues; it reads VAGGVEGEGSGW. A phosphoserine mark is found at Ser1451, Ser1454, and Ser1470. Thr1483 carries the post-translational modification Phosphothreonine. Ser1490 is subject to Phosphoserine. Thr1526 carries the phosphothreonine modification. Fibronectin type-III domains are found at residues 1526 to 1621 and 1639 to 1735; these read TPTR…VHPQ and APGP…SQVG. Ser1787 is subject to Phosphoserine.

It belongs to the integrin beta chain family. As to quaternary structure, heterodimer of an alpha and a beta subunit. Beta-4 associates with alpha-6. Interacts (via cytoplasmic region) with COL17A1 (via cytoplasmic region). Interacts (via cytoplasmic region) with DST isoform 3 (via N-terminus). Interacts (via cytoplasmic domain) with DST (via N-terminus). Interacts with RAC1. ITGA6:ITGB4 is found in a ternary complex with NRG1 and ERBB3. ITGA6:ITGB4 is found in a ternary complex with IGF1 and IGF1R. ITGA6:ITGB4 interacts with IGF2. Interacts with TMEM268; this interaction prevents ITGB4 degradation. In terms of processing, palmitoylated by DHHC3 at several cysteines of the membrane-proximal region, enhancing stability and cell surface expression. Palmitoylation also promotes secondary association with tertaspanins.

It is found in the cell membrane. The protein localises to the cell junction. Its subcellular location is the hemidesmosome. In terms of biological role, integrin alpha-6/beta-4 is a receptor for laminin. It plays a critical structural role in the hemidesmosome of epithelial cells. Is required for the regulation of keratinocyte polarity and motility. ITGA6:ITGB4 binds to NRG1 (via EGF domain) and this binding is essential for NRG1-ERBB signaling. ITGA6:ITGB4 binds to IGF1 and this binding is essential for IGF1 signaling. ITGA6:ITGB4 binds to IGF2 and this binding is essential for IGF2 signaling. This chain is Integrin beta-4 (Itgb4), found in Mus musculus (Mouse).